We begin with the raw amino-acid sequence, 212 residues long: F420-dependent NADP reductase (212 aa).

Residues Thr-9–Leu-12, Ser-31–Arg-32, Lys-36, Ile-72, His-76, Val-98, and Ala-137 each bind NADP(+). Residue Leu-207 participates in coenzyme F420-(gamma-Glu)n binding.

This sequence belongs to the F420-dependent NADP reductase family. Homodimer.

It catalyses the reaction reduced coenzyme F420-(gamma-L-Glu)(n) + NADP(+) = oxidized coenzyme F420-(gamma-L-Glu)(n) + NADPH + 2 H(+). In terms of biological role, catalyzes the reversible reduction of NADP(+) by F420H(2). In this reaction the proS hydrogen at C5 of F420 is transferred into the proS position at C4 of NADPH. This Archaeoglobus fulgidus (strain ATCC 49558 / DSM 4304 / JCM 9628 / NBRC 100126 / VC-16) protein is F420-dependent NADP reductase (fno).